The following is a 134-amino-acid chain: Small ribosomal subunit protein uS12 (134 aa).

The tract at residues 1–26 is disordered; it reads MPTTQQLLRKGRTTLQKKSKVPALKG. Residues 9–20 are compositionally biased toward basic residues; sequence RKGRTTLQKKSK. Aspartate 89 carries the 3-methylthioaspartic acid modification. Residues 103–134 are disordered; it reads DTQGVKDRNKSRSKYGTKKPKAGAAAAGAKKK. Residues 113–123 show a composition bias toward basic residues; it reads SRSKYGTKKPK. Over residues 124–134 the composition is skewed to low complexity; that stretch reads AGAAAAGAKKK.

The protein belongs to the universal ribosomal protein uS12 family. In terms of assembly, part of the 30S ribosomal subunit. Contacts proteins S8 and S17. May interact with IF1 in the 30S initiation complex.

In terms of biological role, with S4 and S5 plays an important role in translational accuracy. Its function is as follows. Interacts with and stabilizes bases of the 16S rRNA that are involved in tRNA selection in the A site and with the mRNA backbone. Located at the interface of the 30S and 50S subunits, it traverses the body of the 30S subunit contacting proteins on the other side and probably holding the rRNA structure together. The combined cluster of proteins S8, S12 and S17 appears to hold together the shoulder and platform of the 30S subunit. This Deinococcus geothermalis (strain DSM 11300 / CIP 105573 / AG-3a) protein is Small ribosomal subunit protein uS12.